Here is a 235-residue protein sequence, read N- to C-terminus: NAD(P)H-hydrate epimerase (235 aa).

The YjeF N-terminal domain occupies 12-218 (AIVMDQLLMG…EFLKETNLTI (207 aa)). Position 62-66 (62-66 (NNGGD)) interacts with (6S)-NADPHX. 2 residues coordinate K(+): asparagine 63 and aspartate 127. (6S)-NADPHX-binding positions include 131–137 (GYSFKGD) and aspartate 161. Serine 164 lines the K(+) pocket.

The protein belongs to the NnrE/AIBP family. K(+) is required as a cofactor.

The enzyme catalyses (6R)-NADHX = (6S)-NADHX. It carries out the reaction (6R)-NADPHX = (6S)-NADPHX. Its function is as follows. Catalyzes the epimerization of the S- and R-forms of NAD(P)HX, a damaged form of NAD(P)H that is a result of enzymatic or heat-dependent hydration. This is a prerequisite for the S-specific NAD(P)H-hydrate dehydratase to allow the repair of both epimers of NAD(P)HX. The sequence is that of NAD(P)H-hydrate epimerase from Dictyostelium discoideum (Social amoeba).